The chain runs to 632 residues: Biosynthetic arginine decarboxylase (632 aa).

N6-(pyridoxal phosphate)lysine is present on K101. 281–291 (FDVGGGLGVDY) contributes to the substrate binding site.

Belongs to the Orn/Lys/Arg decarboxylase class-II family. SpeA subfamily. Mg(2+) serves as cofactor. Requires pyridoxal 5'-phosphate as cofactor.

The catalysed reaction is L-arginine + H(+) = agmatine + CO2. Its pathway is amine and polyamine biosynthesis; agmatine biosynthesis; agmatine from L-arginine: step 1/1. Catalyzes the biosynthesis of agmatine from arginine. This Klebsiella pneumoniae (strain 342) protein is Biosynthetic arginine decarboxylase.